Here is a 227-residue protein sequence, read N- to C-terminus: MSKNIRINEIPSGERPREKLLFYGAQFLSNEELLAIILRTGNKDSNVVELSYRIIHSVGGLNGLFKASAKELMEVKGVKEAKATQILAMCELYKRFKVSELAQVKISKPSDVAKLVLDELRMLRQEVLILINLDTKNKVISKKEIFKGGLNSSLVHPREIFREAVKDSAASIIICHNHPSGDPTPSRDDINITTRLKECGKMMGIELLDHLIIGDNRFISLKEKDIL.

An MPN domain is found at 105 to 227; it reads KISKPSDVAK…FISLKEKDIL (123 aa). Histidine 176, histidine 178, and aspartate 189 together coordinate Zn(2+). A JAMM motif motif is present at residues 176 to 189; it reads HNHPSGDPTPSRDD.

Belongs to the UPF0758 family.

The chain is UPF0758 protein CPF_2399 from Clostridium perfringens (strain ATCC 13124 / DSM 756 / JCM 1290 / NCIMB 6125 / NCTC 8237 / Type A).